Consider the following 87-residue polypeptide: NADH dehydrogenase [ubiquinone] 1 alpha subcomplex subunit 4-like 2 (87 aa).

This sequence belongs to the complex I NDUFA4 subunit family.

This Mus musculus (Mouse) protein is NADH dehydrogenase [ubiquinone] 1 alpha subcomplex subunit 4-like 2 (Ndufa4l2).